The chain runs to 254 residues: NH(3)-dependent NAD(+) synthetase (254 aa).

Residue 32–39 participates in ATP binding; the sequence is GISGGIDS. Aspartate 38 contributes to the Mg(2+) binding site. Residue arginine 113 coordinates deamido-NAD(+). An ATP-binding site is contributed by threonine 133. Glutamate 138 provides a ligand contact to Mg(2+). 2 residues coordinate deamido-NAD(+): lysine 146 and aspartate 153. Residues lysine 162 and threonine 184 each coordinate ATP. 244-245 is a binding site for deamido-NAD(+); it reads HK.

This sequence belongs to the NAD synthetase family. As to quaternary structure, homodimer.

The catalysed reaction is deamido-NAD(+) + NH4(+) + ATP = AMP + diphosphate + NAD(+) + H(+). Its pathway is cofactor biosynthesis; NAD(+) biosynthesis; NAD(+) from deamido-NAD(+) (ammonia route): step 1/1. In terms of biological role, catalyzes the ATP-dependent amidation of deamido-NAD to form NAD. Uses ammonia as a nitrogen source. This is NH(3)-dependent NAD(+) synthetase from Thermococcus kodakarensis (strain ATCC BAA-918 / JCM 12380 / KOD1) (Pyrococcus kodakaraensis (strain KOD1)).